A 311-amino-acid chain; its full sequence is Probable manganese-dependent inorganic pyrophosphatase (311 aa).

Mn(2+)-binding residues include His-9, Asp-13, Asp-15, Asp-77, His-99, and Asp-151.

It belongs to the PPase class C family. The cofactor is Mn(2+).

Its subcellular location is the cytoplasm. It carries out the reaction diphosphate + H2O = 2 phosphate + H(+). This chain is Probable manganese-dependent inorganic pyrophosphatase, found in Streptococcus agalactiae serotype III (strain NEM316).